We begin with the raw amino-acid sequence, 145 residues long: Protein cornichon homolog 1 (145 aa).

A run of 3 helical transmembrane segments spans residues 5-25 (FAAFCYLLALIAVGFCIFFAI), 57-77 (IIHGTFTVLFIFSWQLISILA), and 116-136 (LRISWIKLAFYLVSFFYYLYA).

This sequence belongs to the cornichon family. As to quaternary structure, interacts with glr-1. In terms of tissue distribution, widely expressed in the nervous system including in the AVA interneurons.

The protein resides in the endoplasmic reticulum membrane. It localises to the synapse. The protein localises to the cell projection. It is found in the dendrite. Negatively regulates export of glr-1 from the endoplasmic reticulum to synapses. The chain is Protein cornichon homolog 1 from Caenorhabditis elegans.